Consider the following 155-residue polypeptide: Cyanate hydratase (155 aa).

Catalysis depends on residues Arg95, Glu98, and Ser121.

Belongs to the cyanase family.

The catalysed reaction is cyanate + hydrogencarbonate + 3 H(+) = NH4(+) + 2 CO2. Functionally, catalyzes the reaction of cyanate with bicarbonate to produce ammonia and carbon dioxide. In Pseudomonas savastanoi pv. phaseolicola (strain 1448A / Race 6) (Pseudomonas syringae pv. phaseolicola (strain 1448A / Race 6)), this protein is Cyanate hydratase.